The primary structure comprises 628 residues: tRNA uridine 5-carboxymethylaminomethyl modification enzyme MnmG (628 aa).

G13–G18 contributes to the FAD binding site. G273–F287 contacts NAD(+).

Belongs to the MnmG family. As to quaternary structure, homodimer. Heterotetramer of two MnmE and two MnmG subunits. The cofactor is FAD.

It is found in the cytoplasm. Its function is as follows. NAD-binding protein involved in the addition of a carboxymethylaminomethyl (cmnm) group at the wobble position (U34) of certain tRNAs, forming tRNA-cmnm(5)s(2)U34. The polypeptide is tRNA uridine 5-carboxymethylaminomethyl modification enzyme MnmG (Buchnera aphidicola subsp. Acyrthosiphon pisum (strain 5A)).